The primary structure comprises 287 residues: MSLFSPHRILLRTGSAFQLATATRALLSTSSQLRNTKNAQSGLAEQARAEEPVASSPSQTTRPEQKSLEEETTKQTQTHADSTVNEWGARLTDLNINARLPRSVQALYLRPLRRKAEYGLPVCDLQLRSYSVRNLEFFADFAIRAAYYLNLPVSGPVPLPKIVERWTFPRSSFVHKKSQENFERITVRRLIQIKDGNSQAVQAWLAFLRKHAFYGVGMKANIWEHESIEIAKTMDQTLPEIEKALEPHISQFGRREDAEPAHDLITNFLGSERLSLSKGPLTDVRGG.

The N-terminal 33 residues, 1-33 (MSLFSPHRILLRTGSAFQLATATRALLSTSSQL), are a transit peptide targeting the mitochondrion. A compositionally biased stretch (polar residues) spans 33–43 (LRNTKNAQSGL). A disordered region spans residues 33 to 84 (LRNTKNAQSGLAEQARAEEPVASSPSQTTRPEQKSLEEETTKQTQTHADSTV). Basic and acidic residues predominate over residues 63–73 (PEQKSLEEETT). A compositionally biased stretch (polar residues) spans 74-84 (KQTQTHADSTV).

Belongs to the universal ribosomal protein uS10 family. As to quaternary structure, part of the mitochondrial small ribosomal subunit.

The protein localises to the mitochondrion. Its function is as follows. Involved in mitochondrial genome encoded proteins translation. Involved in the binding of tRNA to the ribosomes. The polypeptide is Small ribosomal subunit protein uS10m (rsm10) (Emericella nidulans (strain FGSC A4 / ATCC 38163 / CBS 112.46 / NRRL 194 / M139) (Aspergillus nidulans)).